Consider the following 227-residue polypeptide: Probable septum site-determining protein MinC (227 aa).

The protein belongs to the MinC family. In terms of assembly, interacts with MinD and FtsZ.

Cell division inhibitor that blocks the formation of polar Z ring septums. Rapidly oscillates between the poles of the cell to destabilize FtsZ filaments that have formed before they mature into polar Z rings. Prevents FtsZ polymerization. In Acetivibrio thermocellus (strain ATCC 27405 / DSM 1237 / JCM 9322 / NBRC 103400 / NCIMB 10682 / NRRL B-4536 / VPI 7372) (Clostridium thermocellum), this protein is Probable septum site-determining protein MinC.